The sequence spans 288 residues: Release factor glutamine methyltransferase (288 aa).

S-adenosyl-L-methionine contacts are provided by Asp142 and Asn186. A substrate-binding site is contributed by 186 to 189 (NPPY).

It belongs to the protein N5-glutamine methyltransferase family. PrmC subfamily.

The enzyme catalyses L-glutaminyl-[peptide chain release factor] + S-adenosyl-L-methionine = N(5)-methyl-L-glutaminyl-[peptide chain release factor] + S-adenosyl-L-homocysteine + H(+). Methylates the class 1 translation termination release factors RF1/PrfA and RF2/PrfB on the glutamine residue of the universally conserved GGQ motif. The chain is Release factor glutamine methyltransferase from Mycobacterium leprae (strain TN).